The following is a 391-amino-acid chain: U-box domain-containing protein 57 (391 aa).

Residues 1 to 178 (MVKNSYVLFA…DLTERLLQVE (178 aa)) form the MIF4G domain. One can recognise a U-box domain in the interval 322-391 (QPPPSFICPI…LRSAIEELGR (70 aa)).

The catalysed reaction is S-ubiquitinyl-[E2 ubiquitin-conjugating enzyme]-L-cysteine + [acceptor protein]-L-lysine = [E2 ubiquitin-conjugating enzyme]-L-cysteine + N(6)-ubiquitinyl-[acceptor protein]-L-lysine.. The protein operates within protein modification; protein ubiquitination. Its function is as follows. Functions as an E3 ubiquitin ligase. This is U-box domain-containing protein 57 (PUB57) from Arabidopsis thaliana (Mouse-ear cress).